Consider the following 180-residue polypeptide: tRNA (cytidine(56)-2'-O)-methyltransferase (180 aa).

Residues Leu-83, 115–119, and 133–140 each bind S-adenosyl-L-methionine; these read GAEKV and VGNQPHSE.

It belongs to the aTrm56 family. Homodimer.

It is found in the cytoplasm. The catalysed reaction is cytidine(56) in tRNA + S-adenosyl-L-methionine = 2'-O-methylcytidine(56) in tRNA + S-adenosyl-L-homocysteine + H(+). Functionally, specifically catalyzes the AdoMet-dependent 2'-O-ribose methylation of cytidine at position 56 in tRNAs. This Methanococcus aeolicus (strain ATCC BAA-1280 / DSM 17508 / OCM 812 / Nankai-3) protein is tRNA (cytidine(56)-2'-O)-methyltransferase.